Here is a 204-residue protein sequence, read N- to C-terminus: Putative F-box protein L168 (204 aa).

One can recognise an F-box domain in the interval 1 to 46 (MNLCDLFDEIIIGIIDELSDRDKIKFMTTCSRFYYFIDKTKYFDIY). The tract at residues 161–184 (NETNKITNNHTNKKINNNKKHQNN) is disordered. Residues 171 to 183 (TNKKINNNKKHQN) show a composition bias toward basic residues.

This Acanthamoeba polyphaga (Amoeba) protein is Putative F-box protein L168.